Reading from the N-terminus, the 745-residue chain is Pheromone-processing carboxypeptidase KEX1 (745 aa).

Positions 1–47 (MSHFKYRNQTTDICNAAALDAFAMYSNYSVPLALLFALLLSFQTARA) are cleaved as a signal peptide. The Lumenal segment spans residues 48–655 (LKAADEYAVS…DDDHNSGSHL (608 aa)). Catalysis depends on residues Ser-214 and Asp-418. Asn-471 and Asn-479 each carry an N-linked (GlcNAc...) asparagine glycan. His-482 is an active-site residue. The span at 515–526 (ITDDVNKGKDGD) shows a compositional bias: basic and acidic residues. Residues 515–651 (ITDDVNKGKD…AEDEDDDHNS (137 aa)) are disordered. The span at 527–537 (ASETDDTTELD) shows a compositional bias: acidic residues. The segment covering 538–549 (CEGKDKLSEECK) has biased composition (basic and acidic residues). An N-linked (GlcNAc...) asparagine glycan is attached at Asn-552. Composition is skewed to acidic residues over residues 570–579 (NEEDDNDDTE) and 587–629 (DEKD…DDDK). A compositionally biased stretch (basic and acidic residues) spans 630-640 (DGDKPEGKNND). A helical transmembrane segment spans residues 656–676 (AVTMICLLVSGTIIGGLYFTF). Residues 677-745 (RDRFRPRLRA…SRDSFELDNL (69 aa)) are Cytoplasmic-facing. Residues 709–745 (EQDAADLSNPENGAKKKGPYTSVPTQESRDSFELDNL) are disordered. A compositionally biased stretch (basic and acidic residues) spans 735–745 (ESRDSFELDNL).

This sequence belongs to the peptidase S10 family.

It localises to the golgi apparatus. It is found in the trans-Golgi network membrane. The catalysed reaction is Preferential release of a C-terminal arginine or lysine residue.. Protease with a carboxypeptidase B-like function involved in the C-terminal processing of the lysine and arginine residues from protein precursors. Promotes cell fusion and is involved in the programmed cell death. In Lachancea thermotolerans (strain ATCC 56472 / CBS 6340 / NRRL Y-8284) (Yeast), this protein is Pheromone-processing carboxypeptidase KEX1 (KEX1).